We begin with the raw amino-acid sequence, 296 residues long: Protein FAM221A (296 aa).

The interval 235–263 is disordered; sequence MQPPSTSSPQPLAVGPSTQISSLRKPEED. The segment covering 237 to 256 has biased composition (polar residues); the sequence is PPSTSSPQPLAVGPSTQISS.

Belongs to the FAM221 family.

The protein is Protein FAM221A (Fam221a) of Rattus norvegicus (Rat).